The chain runs to 253 residues: Triosephosphate isomerase (253 aa).

9–11 (NWK) provides a ligand contact to substrate. H98 functions as the Electrophile in the catalytic mechanism. The active-site Proton acceptor is the E170. Residues G176, S216, and 237–238 (GG) contribute to the substrate site.

This sequence belongs to the triosephosphate isomerase family. In terms of assembly, homodimer.

It localises to the cytoplasm. It carries out the reaction D-glyceraldehyde 3-phosphate = dihydroxyacetone phosphate. The protein operates within carbohydrate biosynthesis; gluconeogenesis. Its pathway is carbohydrate degradation; glycolysis; D-glyceraldehyde 3-phosphate from glycerone phosphate: step 1/1. In terms of biological role, involved in the gluconeogenesis. Catalyzes stereospecifically the conversion of dihydroxyacetone phosphate (DHAP) to D-glyceraldehyde-3-phosphate (G3P). The chain is Triosephosphate isomerase from Amoebophilus asiaticus (strain 5a2).